A 297-amino-acid polypeptide reads, in one-letter code: UDP-N-acetylenolpyruvoylglucosamine reductase (297 aa).

Residues 27 to 191 form the FAD-binding PCMH-type domain; the sequence is TGGNADIFVM…LDATFSLELE (165 aa). Arginine 170 is a catalytic residue. The active-site Proton donor is serine 220. Residue glutamate 290 is part of the active site.

Belongs to the MurB family. The cofactor is FAD.

It is found in the cytoplasm. It catalyses the reaction UDP-N-acetyl-alpha-D-muramate + NADP(+) = UDP-N-acetyl-3-O-(1-carboxyvinyl)-alpha-D-glucosamine + NADPH + H(+). The protein operates within cell wall biogenesis; peptidoglycan biosynthesis. Cell wall formation. The chain is UDP-N-acetylenolpyruvoylglucosamine reductase from Listeria welshimeri serovar 6b (strain ATCC 35897 / DSM 20650 / CCUG 15529 / CIP 8149 / NCTC 11857 / SLCC 5334 / V8).